Consider the following 132-residue polypeptide: Agouti-signaling protein (132 aa).

The N-terminal stretch at 1–22 is a signal peptide; the sequence is MDVTRLLLATLLVFLCFFTAYS. Residue N39 is glycosylated (N-linked (GlcNAc...) asparagine). Residues 62 to 88 are disordered; that stretch reads ISRKEAEKKRSSKKEASMKKVARPRTP. The segment covering 63-79 has biased composition (basic and acidic residues); the sequence is SRKEAEKKRSSKKEASM. 5 cysteine pairs are disulfide-bonded: C93–C108, C100–C114, C107–C125, C111–C132, and C116–C123. Residues 93 to 132 form the Agouti domain; that stretch reads CVATRDSCKPPAPACCDPCASCQCRFFRSACSCRVLSLNC.

The protein resides in the secreted. Its function is as follows. Involved in the regulation of melanogenesis. The binding of ASP to MC1R precludes alpha-MSH initiated signaling and thus blocks production of cAMP, leading to a down-regulation of eumelanogenesis (brown/black pigment) and thus increasing synthesis of pheomelanin (yellow/red pigment). The polypeptide is Agouti-signaling protein (ASIP) (Macaca radiata (Bonnet macaque)).